Reading from the N-terminus, the 292-residue chain is MKIRVHATIANFGPGFDVFGVGIGEPYDELSFRESSEWEIRVKGHDVPADVRNTAVVAARALAEMAGEEVALRMKLRKGIRPRSGLGSSGASSLAGALAMARVLGVEDERLILRAAMEGERAASGSAHGDNVVPAYYGDFTILESYEPLRVRRIPVDFDVVAVLPAVEIPTSEARRVLPPKIPLKDAVRNIALASSLVLALKENDLKAVGRLLDDRIALPYRKRLMPWYDRARKAALEAGAYGFSVSGSGPAVFAVGGDVAQIGKAVAEAFEGFGIEVDVYVTKAGRGALWF.

An ATP-binding site is contributed by Arg-81–Ala-91.

This sequence belongs to the GHMP kinase family. Homoserine kinase subfamily.

It localises to the cytoplasm. The enzyme catalyses L-homoserine + ATP = O-phospho-L-homoserine + ADP + H(+). Its pathway is amino-acid biosynthesis; L-threonine biosynthesis; L-threonine from L-aspartate: step 4/5. In terms of biological role, catalyzes the ATP-dependent phosphorylation of L-homoserine to L-homoserine phosphate. The protein is Homoserine kinase of Thermococcus gammatolerans (strain DSM 15229 / JCM 11827 / EJ3).